We begin with the raw amino-acid sequence, 40 residues long: Dolichyl-diphosphooligosaccharide--protein glycosyltransferase subunit 4 (40 aa).

At 1 to 4 (MITD) the chain is on the lumenal side. Residues 5–25 (VQLAIFSNVLGVFLFLLVVAY) form a helical membrane-spanning segment. Topologically, residues 26 to 40 (HYINANTGKSSPKAK) are cytoplasmic.

It belongs to the OST4 family. As to quaternary structure, component of the oligosaccharyltransferase (OST) complex.

The protein resides in the endoplasmic reticulum membrane. Subunit of the oligosaccharyl transferase (OST) complex that catalyzes the initial transfer of a defined glycan (Glc(3)Man(9)GlcNAc(2) in eukaryotes) from the lipid carrier dolichol-pyrophosphate to an asparagine residue within an Asn-X-Ser/Thr consensus motif in nascent polypeptide chains, the first step in protein N-glycosylation. N-glycosylation occurs cotranslationally and the complex associates with the Sec61 complex at the channel-forming translocon complex that mediates protein translocation across the endoplasmic reticulum (ER). All subunits are required for a maximal enzyme activity. The polypeptide is Dolichyl-diphosphooligosaccharide--protein glycosyltransferase subunit 4 (Drosophila persimilis (Fruit fly)).